A 297-amino-acid polypeptide reads, in one-letter code: HTH-type transcriptional regulator ArgP (297 aa).

The HTH lysR-type domain maps to 4 to 60 (PDYRTLQALDAVIRERGFERAAQKLCITQSAVSQRIKQLENMFGQPLLVRTVPPRPT). A DNA-binding region (H-T-H motif) is located at residues 21 to 40 (FERAAQKLCITQSAVSQRIK).

It belongs to the LysR transcriptional regulatory family. In terms of assembly, homodimer.

Its function is as follows. Controls the transcription of genes involved in arginine and lysine metabolism. This chain is HTH-type transcriptional regulator ArgP, found in Citrobacter koseri (strain ATCC BAA-895 / CDC 4225-83 / SGSC4696).